Consider the following 597-residue polypeptide: Myrcene synthase, chloroplastic (597 aa).

The transit peptide at 1-56 directs the protein to the chloroplast; sequence MALKLLTSLPMYNFSRVPVSSKDPILLVTSRTRNGYLARPVQCMVANKVSTSPDIL. (2E)-geranyl diphosphate is bound by residues arginine 310, aspartate 347, aspartate 351, arginine 488, and aspartate 491. The Mg(2+) site is built by aspartate 347 and aspartate 351. The DDXXD motif motif lies at 347 to 351; sequence DDVYD. Mg(2+) is bound by residues aspartate 491, threonine 495, and glutamate 499.

This sequence belongs to the terpene synthase family. Tpsb subfamily. Mg(2+) serves as cofactor. Requires Mn(2+) as cofactor.

Its subcellular location is the plastid. It is found in the chloroplast. The catalysed reaction is (2E)-geranyl diphosphate = beta-myrcene + diphosphate. Functionally, involved in monoterpene (C10) biosynthesis. The major product is myrcene followed by minor amounts (1.2%) of the cyclic monoterpene limonene. The polypeptide is Myrcene synthase, chloroplastic (Quercus ilex (Holly oak)).